The chain runs to 192 residues: Ribose 1,5-bisphosphate phosphokinase PhnN (192 aa).

15–22 (GPSGAGKD) contributes to the ATP binding site.

Belongs to the ribose 1,5-bisphosphokinase family.

It carries out the reaction alpha-D-ribose 1,5-bisphosphate + ATP = 5-phospho-alpha-D-ribose 1-diphosphate + ADP. Its pathway is metabolic intermediate biosynthesis; 5-phospho-alpha-D-ribose 1-diphosphate biosynthesis; 5-phospho-alpha-D-ribose 1-diphosphate from D-ribose 5-phosphate (route II): step 3/3. Functionally, catalyzes the phosphorylation of ribose 1,5-bisphosphate to 5-phospho-D-ribosyl alpha-1-diphosphate (PRPP). This Brucella abortus biovar 1 (strain 9-941) protein is Ribose 1,5-bisphosphate phosphokinase PhnN.